The primary structure comprises 338 residues: Solute carrier family 35 member G5 (338 aa).

The disordered stretch occupies residues 1–21 (MAGSHPYFNLPDSTHPSPPSA). 9 consecutive transmembrane segments (helical) span residues 37 to 57 (TNGLLVALLGGGLPAGFVGPL), 67 to 87 (LPSLELLICRCLFHLPIALPL), 105 to 125 (CFCALLNVLSIGCAYSAVQVV), 160 to 180 (CGLLGSILGLIIIVGPGLWTL), 190 to 210 (ALGYVQAFLGGLALSLGLLVY), 221 to 241 (TVAFLFGLVGLLGFVPGLFVL), 250 to 270 (LLSWSCVGAVGILALVSFTCV), 281 to 301 (LVCAVLHSEVVVALILQYYVL), and 305 to 325 (VAPFDITGAGIVLGSIAIITA). The EamA 1 domain occupies 49-174 (LPAGFVGPLS…SILGLIIIVG (126 aa)). The EamA 2 domain occupies 272-325 (YAVTKAHPALVCAVLHSEVVVALILQYYVLHETVAPFDITGAGIVLGSIAIITA).

Belongs to the SLC35G solute transporter family.

The protein resides in the membrane. In Pan paniscus (Pygmy chimpanzee), this protein is Solute carrier family 35 member G5 (SLC35G5).